The following is a 211-amino-acid chain: Thiamine-phosphate synthase (211 aa).

Residues 37–41 (QLRIK) and N69 contribute to the 4-amino-2-methyl-5-(diphosphooxymethyl)pyrimidine site. The Mg(2+) site is built by D70 and D89. 4-amino-2-methyl-5-(diphosphooxymethyl)pyrimidine is bound at residue S108. 134 to 136 (TQT) provides a ligand contact to 2-[(2R,5Z)-2-carboxy-4-methylthiazol-5(2H)-ylidene]ethyl phosphate. K137 provides a ligand contact to 4-amino-2-methyl-5-(diphosphooxymethyl)pyrimidine. 2-[(2R,5Z)-2-carboxy-4-methylthiazol-5(2H)-ylidene]ethyl phosphate is bound by residues G166 and 186–187 (VS).

Belongs to the thiamine-phosphate synthase family. It depends on Mg(2+) as a cofactor.

The enzyme catalyses 2-[(2R,5Z)-2-carboxy-4-methylthiazol-5(2H)-ylidene]ethyl phosphate + 4-amino-2-methyl-5-(diphosphooxymethyl)pyrimidine + 2 H(+) = thiamine phosphate + CO2 + diphosphate. It catalyses the reaction 2-(2-carboxy-4-methylthiazol-5-yl)ethyl phosphate + 4-amino-2-methyl-5-(diphosphooxymethyl)pyrimidine + 2 H(+) = thiamine phosphate + CO2 + diphosphate. It carries out the reaction 4-methyl-5-(2-phosphooxyethyl)-thiazole + 4-amino-2-methyl-5-(diphosphooxymethyl)pyrimidine + H(+) = thiamine phosphate + diphosphate. It participates in cofactor biosynthesis; thiamine diphosphate biosynthesis; thiamine phosphate from 4-amino-2-methyl-5-diphosphomethylpyrimidine and 4-methyl-5-(2-phosphoethyl)-thiazole: step 1/1. Its function is as follows. Condenses 4-methyl-5-(beta-hydroxyethyl)thiazole monophosphate (THZ-P) and 2-methyl-4-amino-5-hydroxymethyl pyrimidine pyrophosphate (HMP-PP) to form thiamine monophosphate (TMP). In Escherichia coli O1:K1 / APEC, this protein is Thiamine-phosphate synthase.